Consider the following 193-residue polypeptide: Ganglioside GM2 activator (193 aa).

An N-terminal signal peptide occupies residues 1 to 20 (MHRLPLLLLLGLLLAGSVAP). Disulfide bonds link Cys-39/Cys-183, Cys-99/Cys-106, Cys-112/Cys-138, and Cys-125/Cys-136. A glycan (N-linked (GlcNAc...) asparagine) is linked at Asn-151.

In terms of tissue distribution, widely expressed. Most abundant in kidney and testis.

The protein resides in the lysosome. It catalyses the reaction cholesterol(in) = cholesterol(out). Functionally, binds gangliosides and stimulates ganglioside GM2 degradation. It stimulates only the breakdown of ganglioside GM2 and glycolipid GA2 by beta-hexosaminidase A. It extracts single GM2 molecules from membranes and presents them in soluble form to beta-hexosaminidase A for cleavage of N-acetyl-D-galactosamine and conversion to GM3. The large binding pocket can accommodate several single chain phospholipids and fatty acids, GM2A also exhibits some calcium-independent phospholipase activity. Has cholesterol transfer activity. The protein is Ganglioside GM2 activator of Mus musculus (Mouse).